The chain runs to 297 residues: Aspartate carbamoyltransferase catalytic subunit (297 aa).

Carbamoyl phosphate is bound by residues Arg-49 and Thr-50. Lys-77 lines the L-aspartate pocket. Carbamoyl phosphate contacts are provided by Arg-99, His-129, and Gln-132. 2 residues coordinate L-aspartate: Arg-162 and Arg-215. 2 residues coordinate carbamoyl phosphate: Gly-256 and Pro-257.

It belongs to the aspartate/ornithine carbamoyltransferase superfamily. ATCase family. As to quaternary structure, heterododecamer (2C3:3R2) of six catalytic PyrB chains organized as two trimers (C3), and six regulatory PyrI chains organized as three dimers (R2).

It catalyses the reaction carbamoyl phosphate + L-aspartate = N-carbamoyl-L-aspartate + phosphate + H(+). It participates in pyrimidine metabolism; UMP biosynthesis via de novo pathway; (S)-dihydroorotate from bicarbonate: step 2/3. In terms of biological role, catalyzes the condensation of carbamoyl phosphate and aspartate to form carbamoyl aspartate and inorganic phosphate, the committed step in the de novo pyrimidine nucleotide biosynthesis pathway. The polypeptide is Aspartate carbamoyltransferase catalytic subunit (Legionella pneumophila (strain Corby)).